Here is a 203-residue protein sequence, read N- to C-terminus: Orotate phosphoribosyltransferase (203 aa).

Residues Arg94, Lys98, His100, and Glu120–Ser128 each bind 5-phospho-alpha-D-ribose 1-diphosphate. Residue Ser124 coordinates orotate.

It belongs to the purine/pyrimidine phosphoribosyltransferase family. PyrE subfamily. Homodimer. The cofactor is Mg(2+).

The catalysed reaction is orotidine 5'-phosphate + diphosphate = orotate + 5-phospho-alpha-D-ribose 1-diphosphate. Its pathway is pyrimidine metabolism; UMP biosynthesis via de novo pathway; UMP from orotate: step 1/2. Functionally, catalyzes the transfer of a ribosyl phosphate group from 5-phosphoribose 1-diphosphate to orotate, leading to the formation of orotidine monophosphate (OMP). The protein is Orotate phosphoribosyltransferase of Staphylococcus epidermidis (strain ATCC 35984 / DSM 28319 / BCRC 17069 / CCUG 31568 / BM 3577 / RP62A).